We begin with the raw amino-acid sequence, 293 residues long: Probable mediator of RNA polymerase II transcription subunit 15b (293 aa).

The protein belongs to the plant Mediator complex subunit 15 family. Component of the Mediator complex.

It localises to the nucleus. Component of the Mediator complex, a coactivator involved in the regulated transcription of nearly all RNA polymerase II-dependent genes. Mediator functions as a bridge to convey information from gene-specific regulatory proteins to the basal RNA polymerase II transcription machinery. The Mediator complex, having a compact conformation in its free form, is recruited to promoters by direct interactions with regulatory proteins and serves for the assembly of a functional preinitiation complex with RNA polymerase II and the general transcription factors. The polypeptide is Probable mediator of RNA polymerase II transcription subunit 15b (MED15B) (Arabidopsis thaliana (Mouse-ear cress)).